Consider the following 391-residue polypeptide: Elongation factor Tu (391 aa).

Residues 10-201 enclose the tr-type G domain; that stretch reads KPHVNIGTVG…AVDEYIPTPE (192 aa). Positions 19–26 are G1; it reads GHVDHGKT. A GTP-binding site is contributed by 19–26; the sequence is GHVDHGKT. Thr-26 is a Mg(2+) binding site. Residues 55–59 form a G2 region; that stretch reads GITIS. The G3 stretch occupies residues 76-79; the sequence is DCPG. Residues 76–80 and 131–134 contribute to the GTP site; these read DCPGH and NKVD. The tract at residues 131–134 is G4; that stretch reads NKVD. The interval 169-171 is G5; sequence SAL.

The protein belongs to the TRAFAC class translation factor GTPase superfamily. Classic translation factor GTPase family. EF-Tu/EF-1A subfamily. Monomer.

The protein resides in the cytoplasm. It catalyses the reaction GTP + H2O = GDP + phosphate + H(+). In terms of biological role, GTP hydrolase that promotes the GTP-dependent binding of aminoacyl-tRNA to the A-site of ribosomes during protein biosynthesis. The sequence is that of Elongation factor Tu from Ruegeria sp. (strain TM1040) (Silicibacter sp.).